A 133-amino-acid polypeptide reads, in one-letter code: Transmembrane protein 60 (133 aa).

Helical transmembrane passes span 5 to 25, 35 to 55, 78 to 98, and 110 to 130; these read LAQR…MLVL, WFLI…MLIV, AWYL…CAKL, and FIPL…NVFF.

Its subcellular location is the membrane. This chain is Transmembrane protein 60 (Tmem60), found in Mus musculus (Mouse).